Here is a 124-residue protein sequence, read N- to C-terminus: Large ribosomal subunit protein bL12 (124 aa).

Belongs to the bacterial ribosomal protein bL12 family. In terms of assembly, homodimer. Part of the ribosomal stalk of the 50S ribosomal subunit. Forms a multimeric L10(L12)X complex, where L10 forms an elongated spine to which 2 to 4 L12 dimers bind in a sequential fashion. Binds GTP-bound translation factors.

Functionally, forms part of the ribosomal stalk which helps the ribosome interact with GTP-bound translation factors. Is thus essential for accurate translation. The chain is Large ribosomal subunit protein bL12 from Phytoplasma australiense.